Consider the following 153-residue polypeptide: Large ribosomal subunit protein uL30 (153 aa).

This sequence belongs to the universal ribosomal protein uL30 family. As to quaternary structure, part of the 50S ribosomal subunit.

This is Large ribosomal subunit protein uL30 from Methanospirillum hungatei JF-1 (strain ATCC 27890 / DSM 864 / NBRC 100397 / JF-1).